The sequence spans 30 residues: Phospholipase A2 acanmyotoxin-2 (30 aa).

Tyr28 and Gly30 together coordinate Ca(2+).

Requires Ca(2+) as cofactor. In terms of processing, contains seven disulfide bonds. Expressed by the venom gland.

It localises to the secreted. The enzyme catalyses a 1,2-diacyl-sn-glycero-3-phosphocholine + H2O = a 1-acyl-sn-glycero-3-phosphocholine + a fatty acid + H(+). Functionally, snake venom phospholipase A2 (PLA2) that has myotoxic activity but no significant neurotoxicity. PLA2 catalyzes the calcium-dependent hydrolysis of the 2-acyl groups in 3-sn-phosphoglycerides. This chain is Phospholipase A2 acanmyotoxin-2, found in Acanthophis sp. (strain Seram) (Seram death adder).